The chain runs to 193 residues: Thymidine kinase (193 aa).

ATP is bound by residues 9 to 16 and 87 to 90; these read ASMNAGKS and DEAQ. Glu88 functions as the Proton acceptor in the catalytic mechanism. Cys145, Cys147, Cys182, and His185 together coordinate Zn(2+).

Belongs to the thymidine kinase family. As to quaternary structure, homotetramer.

It localises to the cytoplasm. It catalyses the reaction thymidine + ATP = dTMP + ADP + H(+). The chain is Thymidine kinase from Zymomonas mobilis subsp. mobilis (strain ATCC 31821 / ZM4 / CP4).